Reading from the N-terminus, the 496-residue chain is E3 ubiquitin-protein ligase XIAP (496 aa).

BIR repeat units lie at residues 26-93, 163-230, and 264-329; these read EFNR…CRFI, EEAR…CFFV, and YDAR…CKYL. C299, C302, and H319 together coordinate Zn(2+). A Glycyl lysine isopeptide (Lys-Gly) (interchain with G-Cter in ubiquitin) cross-link involves residue K321. C326 lines the Zn(2+) pocket. A Glycyl lysine isopeptide (Lys-Gly) (interchain with G-Cter in ubiquitin) cross-link involves residue K327. At C449 the chain carries S-nitrosocysteine. Residues 449-484 form an RING-type zinc finger; sequence CKICMDRNIAIVFVPCGHLVTCKQCAEAVDKCPMCC.

Belongs to the IAP family. In terms of assembly, monomer, and homodimer. Interacts (via BIR3 domain) with DIABLO/SMAC; the interaction inhibits apoptotic suppressor activity. Interacts with HTRA2/PRSS25; the interaction inhibits apoptotic suppressor activity. Interacts with TAB1/MAP3K7IP1 and AIFM1. Interaction with DIABLO/SMAC hinders binding of TAB1/MAP3K7IP1 and AIFM1. Interacts with TCF25 and COMMD1. Interacts (via BIR3 domain) with SEPTIN4. Interacts with RIP1, RIP2, RIP3, RIP4, CCS and USP19. Interacts (via BIR 2 domain and BIR 3 domain) with HAX1 (via C-terminus) and this interaction blocks ubiquitination of XIAP/BIRC4. Interacts with the monomeric form of BIRC5/survivin. Interacts with TLE3 and TCF7L2/TCF4. Interacts (via BIR 3 and RING domains) with PDCL3. In terms of processing, S-Nitrosylation down-regulates its E3 ubiquitin-protein ligase activity. Post-translationally, autoubiquitinated. Ubiquitinated by TRIM32; leading to proteasomal degradation.

The protein resides in the cytoplasm. The protein localises to the nucleus. The enzyme catalyses S-ubiquitinyl-[E2 ubiquitin-conjugating enzyme]-L-cysteine + [acceptor protein]-L-lysine = [E2 ubiquitin-conjugating enzyme]-L-cysteine + N(6)-ubiquitinyl-[acceptor protein]-L-lysine.. Its function is as follows. Multi-functional protein which regulates not only caspases and apoptosis, but also modulates inflammatory signaling and immunity, copper homeostasis, mitogenic kinase signaling, cell proliferation, as well as cell invasion and metastasis. Acts as a direct caspase inhibitor. Directly bind to the active site pocket of CASP3 and CASP7 and obstructs substrate entry. Inactivates CASP9 by keeping it in a monomeric, inactive state. Acts as an E3 ubiquitin-protein ligase regulating NF-kappa-B signaling and the target proteins for its E3 ubiquitin-protein ligase activity include: RIPK1, RIPK2, MAP3K2/MEKK2, DIABLO/SMAC, AIFM1, CCS, PTEN and BIRC5/survivin. Acts as an important regulator of innate immunity by mediating 'Lys-63'-linked polyubiquitination of RIPK2 downstream of NOD1 and NOD2, thereby transforming RIPK2 into a scaffolding protein for downstream effectors, ultimately leading to activation of the NF-kappa-B and MAP kinases signaling. 'Lys-63'-linked polyubiquitination of RIPK2 also promotes recruitment of the LUBAC complex to RIPK2. Regulates the BMP signaling pathway and the SMAD and MAP3K7/TAK1 dependent pathways leading to NF-kappa-B and JNK activation. Ubiquitination of CCS leads to enhancement of its chaperone activity toward its physiologic target, SOD1, rather than proteasomal degradation. Ubiquitination of MAP3K2/MEKK2 and AIFM1 does not lead to proteasomal degradation. Plays a role in copper homeostasis by ubiquitinating COMMD1 and promoting its proteasomal degradation. Can also function as E3 ubiquitin-protein ligase of the NEDD8 conjugation pathway, targeting effector caspases for neddylation and inactivation. Ubiquitinates and therefore mediates the proteasomal degradation of BCL2 in response to apoptosis. Protects cells from spontaneous formation of the ripoptosome, a large multi-protein complex that has the capability to kill cancer cells in a caspase-dependent and caspase-independent manner. Suppresses ripoptosome formation by ubiquitinating RIPK1 and CASP8. Acts as a positive regulator of Wnt signaling and ubiquitinates TLE1, TLE2, TLE3, TLE4 and AES. Ubiquitination of TLE3 results in inhibition of its interaction with TCF7L2/TCF4 thereby allowing efficient recruitment and binding of the transcriptional coactivator beta-catenin to TCF7L2/TCF4 that is required to initiate a Wnt-specific transcriptional program. In Rattus norvegicus (Rat), this protein is E3 ubiquitin-protein ligase XIAP (Xiap).